The primary structure comprises 233 residues: Ribosomal RNA small subunit methyltransferase G (233 aa).

S-adenosyl-L-methionine is bound by residues Gly96, Leu101, 146–147, and Arg160; that span reads LE.

Belongs to the methyltransferase superfamily. RNA methyltransferase RsmG family.

It localises to the cytoplasm. It carries out the reaction guanosine(527) in 16S rRNA + S-adenosyl-L-methionine = N(7)-methylguanosine(527) in 16S rRNA + S-adenosyl-L-homocysteine. In terms of biological role, specifically methylates the N7 position of guanine in position 527 of 16S rRNA. The protein is Ribosomal RNA small subunit methyltransferase G of Sphingopyxis alaskensis (strain DSM 13593 / LMG 18877 / RB2256) (Sphingomonas alaskensis).